We begin with the raw amino-acid sequence, 860 residues long: Nuclear pore complex protein NUP93B (860 aa).

It belongs to the nucleoporin interacting component (NIC) family. In terms of assembly, part of the nuclear pore complex (NPC). The NPC has an eight-fold symmetrical structure comprising a central transport channel and two rings, the cytoplasmic and nuclear rings, to which eight filaments are attached. The cytoplasmic filaments have loose ends, while the nuclear filaments are joined in a distal ring, forming a nuclear basket. NPCs are highly dynamic in configuration and composition, and can be devided in 3 subcomplexes, the NUP62 subcomplex, the NUP107-160 subcomplex and the NUP93 subcomplex, containing approximately 30 different nucleoporin proteins.

Its subcellular location is the nucleus envelope. It localises to the nucleus. The protein resides in the nuclear pore complex. The chain is Nuclear pore complex protein NUP93B from Arabidopsis thaliana (Mouse-ear cress).